Reading from the N-terminus, the 236-residue chain is MSLKYARVLLKFSGEALMGQGQFGLDSNTLRQVVLEVKALRDLGVEVGLVVGGGNIFRGAQIEGAGIQRTTGDHMGMMATVINALALRDVIEDMGMSSVVYSAMAIEGVSHGFNANHVKKGMAEGQVAIFAAGTGSPFFTTDTAAALRGIEIDADIVLKATKVDGIYTADPAKDSSAQRLAELTYDDVIQKNLQVMDMTAFVLCRDHKMPIRVFDMFKKDAVIRIVKGEDEGTLVH.

11–14 is a binding site for ATP; that stretch reads KFSG. Gly-53 is a binding site for UMP. ATP-binding residues include Gly-54 and Arg-58. UMP-binding positions include Asp-73 and 134 to 141; that span reads TGSPFFTT. 3 residues coordinate ATP: Thr-161, Tyr-167, and Asp-170.

The protein belongs to the UMP kinase family. In terms of assembly, homohexamer.

Its subcellular location is the cytoplasm. The catalysed reaction is UMP + ATP = UDP + ADP. It functions in the pathway pyrimidine metabolism; CTP biosynthesis via de novo pathway; UDP from UMP (UMPK route): step 1/1. With respect to regulation, inhibited by UTP. In terms of biological role, catalyzes the reversible phosphorylation of UMP to UDP. The chain is Uridylate kinase from Hydrogenovibrio crunogenus (strain DSM 25203 / XCL-2) (Thiomicrospira crunogena).